We begin with the raw amino-acid sequence, 460 residues long: ATP synthase subunit beta (460 aa).

ATP is bound at residue glycine 150–threonine 157.

This sequence belongs to the ATPase alpha/beta chains family. In terms of assembly, F-type ATPases have 2 components, CF(1) - the catalytic core - and CF(0) - the membrane proton channel. CF(1) has five subunits: alpha(3), beta(3), gamma(1), delta(1), epsilon(1). CF(0) has three main subunits: a(1), b(2) and c(9-12). The alpha and beta chains form an alternating ring which encloses part of the gamma chain. CF(1) is attached to CF(0) by a central stalk formed by the gamma and epsilon chains, while a peripheral stalk is formed by the delta and b chains.

Its subcellular location is the cell inner membrane. The enzyme catalyses ATP + H2O + 4 H(+)(in) = ADP + phosphate + 5 H(+)(out). Produces ATP from ADP in the presence of a proton gradient across the membrane. The catalytic sites are hosted primarily by the beta subunits. This is ATP synthase subunit beta from Citrobacter koseri (strain ATCC BAA-895 / CDC 4225-83 / SGSC4696).